A 254-amino-acid polypeptide reads, in one-letter code: 5'-nucleotidase SurE (254 aa).

A divalent metal cation is bound by residues Asp-8, Asp-9, Ser-40, and Asn-93.

It belongs to the SurE nucleotidase family. Requires a divalent metal cation as cofactor.

It localises to the cytoplasm. The enzyme catalyses a ribonucleoside 5'-phosphate + H2O = a ribonucleoside + phosphate. In terms of biological role, nucleotidase that shows phosphatase activity on nucleoside 5'-monophosphates. The chain is 5'-nucleotidase SurE from Methylobacterium radiotolerans (strain ATCC 27329 / DSM 1819 / JCM 2831 / NBRC 15690 / NCIMB 10815 / 0-1).